A 398-amino-acid polypeptide reads, in one-letter code: Phosphoglycerate kinase (398 aa).

Substrate-binding positions include aspartate 22–asparagine 24, arginine 38, histidine 61–arginine 64, arginine 120, and arginine 153. Residues lysine 204, glutamate 326, and glycine 352–threonine 355 each bind ATP.

Belongs to the phosphoglycerate kinase family. As to quaternary structure, monomer.

It is found in the cytoplasm. It carries out the reaction (2R)-3-phosphoglycerate + ATP = (2R)-3-phospho-glyceroyl phosphate + ADP. The protein operates within carbohydrate degradation; glycolysis; pyruvate from D-glyceraldehyde 3-phosphate: step 2/5. The protein is Phosphoglycerate kinase of Geobacter metallireducens (strain ATCC 53774 / DSM 7210 / GS-15).